A 436-amino-acid chain; its full sequence is Histidinol dehydrogenase (436 aa).

Positions 135, 196, and 219 each coordinate NAD(+). Positions 242, 264, and 267 each coordinate substrate. Zn(2+)-binding residues include glutamine 264 and histidine 267. Catalysis depends on proton acceptor residues glutamate 332 and histidine 333. Substrate is bound by residues histidine 333, aspartate 366, glutamate 420, and histidine 425. Aspartate 366 is a Zn(2+) binding site. Histidine 425 serves as a coordination point for Zn(2+).

Belongs to the histidinol dehydrogenase family. The cofactor is Zn(2+).

The enzyme catalyses L-histidinol + 2 NAD(+) + H2O = L-histidine + 2 NADH + 3 H(+). It functions in the pathway amino-acid biosynthesis; L-histidine biosynthesis; L-histidine from 5-phospho-alpha-D-ribose 1-diphosphate: step 9/9. Functionally, catalyzes the sequential NAD-dependent oxidations of L-histidinol to L-histidinaldehyde and then to L-histidine. This chain is Histidinol dehydrogenase, found in Methylococcus capsulatus (strain ATCC 33009 / NCIMB 11132 / Bath).